The sequence spans 605 residues: Protein spinster (605 aa).

The interval 1–94 (MSLKHQKQSY…HPLGEHHHIP (94 aa)) is disordered. Positions 27–38 (SSGSSGSSSSEE) are enriched in low complexity. A compositionally biased stretch (polar residues) spans 55 to 67 (TTYSSQQLMPSDT). Residues 76–85 (RLRPHHHHHH) show a composition bias toward basic residues. Residues 115–137 (FTVTVLCFVNLINYMDRFTIAGV) form a helical membrane-spanning segment. Asn-149 carries an N-linked (GlcNAc...) asparagine glycan. The next 5 helical transmembrane spans lie at 153–173 (GLLQTVFVISYMVCAPIFGYL), 180–200 (PWIMAVGVGLWSTTTLLGSFM), 203–223 (FGWFIAFRALVGIGEASYSTI), 240–260 (MLALFYFAIPVGSGLGYIVGS), and 271–291 (WALRVTPILGIVAVFLILLIK). An N-linked (GlcNAc...) asparagine glycan is attached at Asn-319. The next 5 helical transmembrane spans lie at 329-349 (FTCVAFVAGALAWWGPSFIYL), 367-387 (FNFGVITMLAGLLGVPLGSFL), 401-421 (VICAFGLLVSAPLLTGACLLV), 431-451 (LIFFGQLALNLNWAIVADILL), and 465-485 (FQILISHALGDAGSPYLVGAI). N-linked (GlcNAc...) asparagine glycosylation is present at Asn-519. The chain crosses the membrane as a helical span at residues 558-578 (STSFVEVLGGIFFIFTACFII). Asn-583 carries N-linked (GlcNAc...) asparagine glycosylation.

The protein belongs to the major facilitator superfamily. Spinster (TC 2.A.1.49) family. As to expression, enriched in brain (at protein level).

It is found in the late endosome membrane. Its subcellular location is the lysosome membrane. Functionally, probable sphingolipid transporter that plays a central role in endosomes and/or lysosomes storage. Involved in TGF-beta-mediated synaptic growth regulation both pre- and postsynaptically via its function in endosomal storage regulation. Also required during oogenesis by regulating yolk spheres storage. The polypeptide is Protein spinster (spin) (Drosophila melanogaster (Fruit fly)).